The primary structure comprises 301 residues: Homoserine kinase (301 aa).

86–96 (PLARGLGSSAT) contributes to the ATP binding site.

Belongs to the GHMP kinase family. Homoserine kinase subfamily.

The protein resides in the cytoplasm. The catalysed reaction is L-homoserine + ATP = O-phospho-L-homoserine + ADP + H(+). The protein operates within amino-acid biosynthesis; L-threonine biosynthesis; L-threonine from L-aspartate: step 4/5. Its function is as follows. Catalyzes the ATP-dependent phosphorylation of L-homoserine to L-homoserine phosphate. The chain is Homoserine kinase from Thermosynechococcus vestitus (strain NIES-2133 / IAM M-273 / BP-1).